The sequence spans 245 residues: 4-hydroxy-tetrahydrodipicolinate reductase (245 aa).

Residues 7–12, 75–77, and 102–105 each bind NAD(+); these read GAKGKV, GTT, and APNF. The Proton donor/acceptor role is filled by His-132. Position 133 (His-133) interacts with (S)-2,3,4,5-tetrahydrodipicolinate. Residue Lys-136 is the Proton donor of the active site. 142–143 is a (S)-2,3,4,5-tetrahydrodipicolinate binding site; the sequence is GT.

This sequence belongs to the DapB family.

It localises to the cytoplasm. The enzyme catalyses (S)-2,3,4,5-tetrahydrodipicolinate + NAD(+) + H2O = (2S,4S)-4-hydroxy-2,3,4,5-tetrahydrodipicolinate + NADH + H(+). It catalyses the reaction (S)-2,3,4,5-tetrahydrodipicolinate + NADP(+) + H2O = (2S,4S)-4-hydroxy-2,3,4,5-tetrahydrodipicolinate + NADPH + H(+). Its pathway is amino-acid biosynthesis; L-lysine biosynthesis via DAP pathway; (S)-tetrahydrodipicolinate from L-aspartate: step 4/4. Functionally, catalyzes the conversion of 4-hydroxy-tetrahydrodipicolinate (HTPA) to tetrahydrodipicolinate. The polypeptide is 4-hydroxy-tetrahydrodipicolinate reductase (Mycobacterium bovis (strain ATCC BAA-935 / AF2122/97)).